The chain runs to 644 residues: CTP synthase (644 aa).

Positions 300–551 (SIAIVGKYTK…LGLILASVDR (252 aa)) constitute a Glutamine amidotransferase type-1 domain. Catalysis depends on for GATase activity residues Cys-399, His-527, and Glu-529.

The protein belongs to the CTP synthase family.

It catalyses the reaction UTP + L-glutamine + ATP + H2O = CTP + L-glutamate + ADP + phosphate + 2 H(+). The protein operates within pyrimidine metabolism; CTP biosynthesis via de novo pathway; CTP from UDP: step 2/2. Functionally, catalyzes the ATP-dependent amination of UTP to CTP with either L-glutamine or ammonia as the source of nitrogen. Constitutes the rate-limiting enzyme in the synthesis of cytosine nucleotides. The chain is CTP synthase from Drosophila pseudoobscura pseudoobscura (Fruit fly).